The following is a 247-amino-acid chain: ATP synthase subunit a, chloroplastic (247 aa).

Transmembrane regions (helical) follow at residues Gln38–Val58, Val95–Leu115, Ile134–Thr154, Leu199–Leu219, and Gly220–Gly240.

This sequence belongs to the ATPase A chain family. As to quaternary structure, F-type ATPases have 2 components, CF(1) - the catalytic core - and CF(0) - the membrane proton channel. CF(1) has five subunits: alpha(3), beta(3), gamma(1), delta(1), epsilon(1). CF(0) has four main subunits: a, b, b' and c.

Its subcellular location is the plastid. It is found in the chloroplast thylakoid membrane. Key component of the proton channel; it plays a direct role in the translocation of protons across the membrane. The protein is ATP synthase subunit a, chloroplastic of Ceratophyllum demersum (Rigid hornwort).